We begin with the raw amino-acid sequence, 1455 residues long: MATQAVPATAKKRIRKVFGNIHEVVQMPNLIEVQRESYEQFLRSRPADGYVSGLEKTLRSVFPIRDFAGTAELDFVQYELEDPKYDTDECRQRGMTYAAPMRVTLRLIVFEVDPDTETRSVLDIKEQDVYMGDMPLMTENGTFLINGTERVIVSQMHRSPGVLFDHDRGKTHASGKYLFAARVIPYRGSWLDFEFDAKDIVNVRIDRKRKLPVTSLLRALGDAVIEVNPDKGKFEAGDIVAISGVNRACRVKAVAGRLVTVEDPTGAIIPGGLIQTAEGEKIGHVARIRLQGMSGEDILNYFYRTQRFVRGENGWKVPFVAENWRGQKPAFDVVNADTGEVVFPAGTKISPRAANKAGKDGLETLLIPTDQIFGRYSAYDLIDESTGRIYIEAGDEVTPENLEALDKAGFDHVDLLDIDHVSTGPWIRNTLKADKVEDRDHALSEIYRVMRPGEPPTKETAEALFAGLFFDSERYDLSAVGRVKLNMRLELDAEDTVTTLRSEDILAVVKTLVDLKDGKGEIDDIDNLGNRRVRSVGELLENQYRVGLLRMERAVKERMSSVDVSTAMPNDLINAKPAVAAVREFFGSSQLSQFMDQTNPLSEVTHKRRVSALGPGGLTRERAGFEVRDVHPTHYGRICPIETPEGPNIGLINSLASFSRVNKYGFIETPYRKIVDGKVTNEVVYLSAMEEAKHTIAQANAELDSEGRFVEDLISAREAGEFLMAPRDHVTLMDVSPKQLVSVAASLIPFLENDDANRALMGSNMQRQAVPLVRAEAPFVGTGMEETVARDSGAAIAAKRSGIVDQVDATRIVVRATGAVDAGKSGVDIYTLMKFQRSNQSTCINQRPLVKVGDVVNAGDIIADGPSTEFGELALGRNVLVAFMPWNGYNYEDSILISERIVKDDVFTSIHIDEFEVMARDTKLGPEDITRDIPNVGEEALRNLDEAGIVYIGAEVEPGDILCGKITPKGESPMTPEEKLLRAIFGEKASDVRDTSLRLPPGVSGTVVDVRVFNRHGIDKDERAMAIEREEIDRLTKDREDERAILNRANYARLKEMLLGQIATAAPKGIKKGSEINEELLAEVEKREWWKFAVQDDARQADLEAVKAQYDDAVGLIVKKFEDRVEKLQRGDELPPGVLKMVKVFVAVKRKLQPGDKMAGRHGNKGVISRILPQEDMPFLEDGTPVDIVLNPLGVPSRMNVGQIFETHLGWAARGLGKQVTSALEAWREANPDAQAATPPAAVVDRLKEVYGKEYHADIEGRSTDQIVEMAGLLKNGVPMATPVFDGAREADVAEMLRRAGLDESGQVELFDGRTGDQFDRKVTVGYIYMLKLHHLVDDKIHARSIGPYSLVTQQPLGGKAQFGGQRFGEMEVWALQAYGAAYTLQEMLTVKSDDVVGRTKVYEAIVKGDDTFEAGIPESFNVLVKEMRSLGLNVELSSIEDQSDDDDGLAEAAE.

It belongs to the RNA polymerase beta chain family. As to quaternary structure, the RNAP catalytic core consists of 2 alpha, 1 beta, 1 beta' and 1 omega subunit. When a sigma factor is associated with the core the holoenzyme is formed, which can initiate transcription.

The catalysed reaction is RNA(n) + a ribonucleoside 5'-triphosphate = RNA(n+1) + diphosphate. Functionally, DNA-dependent RNA polymerase catalyzes the transcription of DNA into RNA using the four ribonucleoside triphosphates as substrates. This Rhizorhabdus wittichii (strain DSM 6014 / CCUG 31198 / JCM 15750 / NBRC 105917 / EY 4224 / RW1) (Sphingomonas wittichii) protein is DNA-directed RNA polymerase subunit beta.